Consider the following 703-residue polypeptide: Antigen peptide transporter 2 (703 aa).

At 1–6 (MALSHP) the chain is on the lumenal side. The chain crosses the membrane as a helical span at residues 7–27 (RPWASLLLVDLALLGLLQSSL). Residues 28–56 (GTLLPPGLPGLWLEGTLRLGVLWGLLKVG) are Cytoplasmic-facing. A helical membrane pass occupies residues 57–77 (GLLRLVGTFLPLLCLTNPLFF). Residues 78 to 98 (SLRALVGSTMSTSVVRVASAS) are Lumenal-facing. The chain crosses the membrane as a helical span at residues 99 to 119 (WGWLLADYGAVALSLAVWAVL). Over 120-148 (SPAGAQEKEPGQENNRALMIRLLRLSKPD) the chain is Cytoplasmic. A helical transmembrane segment spans residues 149 to 169 (LPFLIVAFIFLAMAVWWEMFI). Residues 152–435 (LIVAFIFLAM…LVYMYGDMLS (284 aa)) form the ABC transmembrane type-1 domain. Topologically, residues 170-187 (PHYSGRVIDILGGDFDPD) are lumenal. A helical transmembrane segment spans residues 188 to 208 (AFASAIFFMCLFSVGSSLSAG). The Cytoplasmic segment spans residues 209-266 (CRGGSFLFAESRINLRIREQLFSSLLRQDLAFFQETKTGELNSRLSSDTSLMSQWLSL). A helical transmembrane segment spans residues 267–287 (NANILLRSLVKVVGLYYFMLQ). At 288-293 (VSPRLT) the chain is on the lumenal side. Residues 294–314 (FLSLLDLPLTIAAEKVYNPRH) traverse the membrane as a helical segment. Residues 301–389 (PLTIAAEKVY…QRVMALGMQV (89 aa)) form a part of the peptide-binding site region. The Cytoplasmic segment spans residues 315–374 (QAVLKEIQDAVAKAGQVVREAVGGLQTVRSFGAEEQEVRRYKEALERCRQLWWRRDLEKS). Residues 375 to 395 (LYLVIQRVMALGMQVLILNVG) form a helical membrane-spanning segment. The Lumenal portion of the chain corresponds to 396 to 408 (VQQILAGEVTRGG). The helical transmembrane segment at 409–429 (LLSFLLYQEEVGHHVQNLVYM) threads the bilayer. Residues 414–433 (LYQEEVGHHVQNLVYMYGDM) form a part of the peptide-binding site region. Topologically, residues 430–703 (YGDMLSNVGA…AHLVQQRLEA (274 aa)) are cytoplasmic. The ABC transporter domain occupies 468–702 (VEFQDVSFSY…YAHLVQQRLE (235 aa)). 503 to 510 (GPNGSGKS) lines the ATP pocket.

Belongs to the ABC transporter superfamily. ABCB family. MHC peptide exporter (TC 3.A.1.209) subfamily. In terms of assembly, heterodimer of TAP1 and TAP2 (TAP1-TAP2). A component of the peptide loading complex (PLC), interacts via TAPBP with MHCI heterodimer; this interaction mediates peptide-MHCI assembly. Mg(2+) is required as a cofactor.

It localises to the endoplasmic reticulum membrane. It catalyses the reaction a peptide antigen(in) + ATP + H2O = a peptide antigen(out) + ADP + phosphate + H(+). Functionally, ABC transporter associated with antigen processing. In complex with TAP1 mediates unidirectional translocation of peptide antigens from cytosol to endoplasmic reticulum (ER) for loading onto MHC class I (MHCI) molecules. Uses the chemical energy of ATP to export peptides against the concentration gradient. During the transport cycle alternates between 'inward-facing' state with peptide binding site facing the cytosol to 'outward-facing' state with peptide binding site facing the ER lumen. Peptide antigen binding to ATP-loaded TAP1-TAP2 induces a switch to hydrolysis-competent 'outward-facing' conformation ready for peptide loading onto nascent MHCI molecules. Subsequently ATP hydrolysis resets the transporter to the 'inward facing' state for a new cycle. As a component of the peptide loading complex (PLC), acts as a molecular scaffold essential for peptide-MHCI assembly and antigen presentation. This Rattus norvegicus (Rat) protein is Antigen peptide transporter 2 (Tap2).